The sequence spans 61 residues: Temporin-CDYa (61 aa).

Positions 1–22 (MFPLKKSLLLLFFLGTINFSFC) are cleaved as a signal peptide. A propeptide spanning residues 23–44 (EEERNAEEERRDDPEERDVAME) is cleaved from the precursor. Leu-59 carries the post-translational modification Leucine amide.

The protein belongs to the frog skin active peptide (FSAP) family. Temporin subfamily. In terms of tissue distribution, expressed by the skin glands.

The protein resides in the secreted. In terms of biological role, antimicrobial peptide. This chain is Temporin-CDYa, found in Rana dybowskii (Dybovsky's frog).